We begin with the raw amino-acid sequence, 597 residues long: Elongation factor 4 (597 aa).

Positions 2 to 184 (KNIRNFSIIA…TMIAKIPPPV (183 aa)) constitute a tr-type G domain. Residues 14–19 (DHGKST) and 131–134 (NKID) contribute to the GTP site.

This sequence belongs to the TRAFAC class translation factor GTPase superfamily. Classic translation factor GTPase family. LepA subfamily.

The protein resides in the cell inner membrane. It catalyses the reaction GTP + H2O = GDP + phosphate + H(+). Functionally, required for accurate and efficient protein synthesis under certain stress conditions. May act as a fidelity factor of the translation reaction, by catalyzing a one-codon backward translocation of tRNAs on improperly translocated ribosomes. Back-translocation proceeds from a post-translocation (POST) complex to a pre-translocation (PRE) complex, thus giving elongation factor G a second chance to translocate the tRNAs correctly. Binds to ribosomes in a GTP-dependent manner. This chain is Elongation factor 4, found in Methylobacillus flagellatus (strain ATCC 51484 / DSM 6875 / VKM B-1610 / KT).